The sequence spans 84 residues: Small ribosomal subunit protein uS17c (84 aa).

The protein belongs to the universal ribosomal protein uS17 family. As to quaternary structure, part of the 30S ribosomal subunit.

The protein localises to the plastid. Its subcellular location is the chloroplast. One of the primary rRNA binding proteins, it binds specifically to the 5'-end of 16S ribosomal RNA. This is Small ribosomal subunit protein uS17c (rps17) from Thalassiosira pseudonana (Marine diatom).